A 122-amino-acid polypeptide reads, in one-letter code: S-adenosylmethionine decarboxylase proenzyme (122 aa).

The active-site Schiff-base intermediate with substrate; via pyruvic acid is S69. S69 carries the pyruvic acid (Ser); by autocatalysis modification. H74 functions as the Proton acceptor; for processing activity in the catalytic mechanism. The active-site Proton donor; for catalytic activity is the C89.

Belongs to the prokaryotic AdoMetDC family. Type 1 subfamily. Heterotetramer of two alpha and two beta chains arranged as a dimer of alpha/beta heterodimers. Pyruvate is required as a cofactor. Post-translationally, is synthesized initially as an inactive proenzyme. Formation of the active enzyme involves a self-maturation process in which the active site pyruvoyl group is generated from an internal serine residue via an autocatalytic post-translational modification. Two non-identical subunits are generated from the proenzyme in this reaction, and the pyruvate is formed at the N-terminus of the alpha chain, which is derived from the carboxyl end of the proenzyme. The post-translation cleavage follows an unusual pathway, termed non-hydrolytic serinolysis, in which the side chain hydroxyl group of the serine supplies its oxygen atom to form the C-terminus of the beta chain, while the remainder of the serine residue undergoes an oxidative deamination to produce ammonia and the pyruvoyl group blocking the N-terminus of the alpha chain.

It carries out the reaction S-adenosyl-L-methionine + H(+) = S-adenosyl 3-(methylsulfanyl)propylamine + CO2. It participates in amine and polyamine biosynthesis; S-adenosylmethioninamine biosynthesis; S-adenosylmethioninamine from S-adenosyl-L-methionine: step 1/1. Functionally, catalyzes the decarboxylation of S-adenosylmethionine to S-adenosylmethioninamine (dcAdoMet), the propylamine donor required for the synthesis of the polyamines spermine and spermidine from the diamine putrescine. In Sulfurisphaera tokodaii (strain DSM 16993 / JCM 10545 / NBRC 100140 / 7) (Sulfolobus tokodaii), this protein is S-adenosylmethionine decarboxylase proenzyme.